We begin with the raw amino-acid sequence, 309 residues long: Putative rhizopine-binding protein (309 aa).

Positions 1 to 20 (MKKFIIGIAAAVLVSTAAHA) are cleaved as a signal peptide.

This sequence belongs to the bacterial solute-binding protein 2 family.

The protein resides in the periplasm. In terms of biological role, involved in rhizopine (L-3-O-methyl-scyllo-inosamine) catabolism. Could be involved in its high affinity transport. The chain is Putative rhizopine-binding protein (mocB) from Rhizobium meliloti (Ensifer meliloti).